Reading from the N-terminus, the 606-residue chain is (R)-limonene synthase 1, chloroplastic (606 aa).

The transit peptide at 1–32 (MSSCINPSTLVTSVNAFKCLPLATNKAAIRIM) directs the protein to the chloroplast. Positions 342 and 346 each coordinate Mn(2+). The substrate site is built by Asp342, Asp346, Arg484, Asp487, and Lys503. A DDXXD motif motif is present at residues 342-346 (DDIYD). Mn(2+) is bound at residue Asp487.

This sequence belongs to the terpene synthase family. The cofactor is Mg(2+). Mn(2+) is required as a cofactor.

Its subcellular location is the plastid. It is found in the chloroplast. It catalyses the reaction (2E)-geranyl diphosphate = (4R)-limonene + diphosphate. The chain is (R)-limonene synthase 1, chloroplastic from Citrus limon (Lemon).